Consider the following 318-residue polypeptide: Pheromone-regulated membrane protein 5 (318 aa).

Residues 78 to 98 traverse the membrane as a helical segment; it reads FIXVGGIAGVIFLAILLWWVI. S129 is subject to Phosphoserine. Positions 238–247 are enriched in low complexity; the sequence is TISSSSASSL. Residues 238–318 form a disordered region; sequence TISSSSASSL…HMLEGKEQDE (81 aa). Basic and acidic residues predominate over residues 250 to 261; sequence GNEKEVGEDIRK. Over residues 276 to 285 the composition is skewed to polar residues; sequence SPESDGSVNR. Phosphoserine is present on residues S279, S282, and S288. The span at 309–318 shows a compositional bias: basic and acidic residues; it reads HMLEGKEQDE. Residue K314 forms a Glycyl lysine isopeptide (Lys-Gly) (interchain with G-Cter in ubiquitin) linkage.

The protein belongs to the PRM5 family.

It is found in the membrane. The polypeptide is Pheromone-regulated membrane protein 5 (PRM5) (Saccharomyces cerevisiae (strain FostersO) (Baker's yeast)).